Here is a 356-residue protein sequence, read N- to C-terminus: Guanine nucleotide-binding protein alpha-15 subunit (356 aa).

Glycine 2 is lipidated: N-myristoyl glycine. Cysteine 5 carries S-palmitoyl cysteine lipidation. The G-alpha domain occupies 33-356 (GNQKLLLLGT…GRNLRGTGME (324 aa)). The interval 36-49 (KLLLLGTGECGKST) is G1 motif. Residues 41–48 (GTGECGKS), 177–183 (LRIRIPT), 202–206 (DVGGQ), 271–274 (NKRD), and alanine 328 contribute to the GTP site. Mg(2+)-binding residues include serine 48 and threonine 183. A G2 motif region spans residues 175–183 (DMLRIRIPT). The interval 198–207 (FRIFDVGGQR) is G3 motif. A G4 motif region spans residues 267–274 (ILFLNKRD). Residues 326–331 (TCATDT) form a G5 motif region.

Belongs to the G-alpha family. As to quaternary structure, g proteins are composed of 3 units; alpha, beta and gamma. The alpha chain contains the guanine nucleotide binding site.

In terms of biological role, guanine nucleotide-binding proteins (G proteins) are involved as modulators or transducers in various transmembrane signaling systems. The protein is Guanine nucleotide-binding protein alpha-15 subunit (gpa-15) of Caenorhabditis briggsae.